Here is a 928-residue protein sequence, read N- to C-terminus: Receptor-like kinase TMK4 (928 aa).

The first 24 residues, 1-24 (MEAPTPLLLLVLLTTITFFTTSVA), serve as a signal peptide directing secretion. At 25–472 (DDQTAMLALA…GGSSGGGGSK (448 aa)) the chain is on the extracellular side. Residues Cys-51 and Cys-58 are joined by a disulfide bond. LRR repeat units follow at residues 61–84 (GRVTTISLADKSLTGFIAPEISTL), 85–107 (SELKSVSIQRNKLSGTIPSFAKL), 108–130 (SSLQEIYMDENNFVGVETGAFAG), 132–157 (TSLQILSLSDNNNITTWSFPSELVDS), 158–180 (TSLTTIYLDNTNIAGVLPDIFDS), 181–205 (LASLQNLRLSYNNITGVLPPSLGKS), 207–229 (IQNLWINNQDLGMSGTIEVLSSM), 230–251 (TSLSQAWLHKNHFFGPIPDLSK), 252–276 (SENLFDLQLRDNDLTGIVPPTLLTL), and 278–298 (SLKNISLDNNKFQGPLPLFSP). Asn-144 carries N-linked (GlcNAc...) asparagine glycosylation. Asn-193 is a glycosylation site (N-linked (GlcNAc...) asparagine). A glycan (N-linked (GlcNAc...) asparagine) is linked at Asn-281. 2 disulfides stabilise this stretch: Cys-310/Cys-318 and Cys-348/Cys-356. LRR repeat units follow at residues 360–383 (GKNVVTLNLGKHGFTGFISPAIAN), 384–407 (LTSLKSLYLNGNDLTGVIPKELTF), and 408–435 (MTSLQLIDVSNNNLRGEIPKFPATVKFS). Asn-383 carries N-linked (GlcNAc...) asparagine glycosylation. The segment at 445 to 465 (TNGGDGSSPGTGGASGGPGGS) is disordered. A helical membrane pass occupies residues 473-493 (VGVIVGVIVAVLVFLAILGFV). The Cytoplasmic portion of the chain corresponds to 494–928 (VYKFVMKRKY…PNTFDSADGR (435 aa)). In terms of domain architecture, Protein kinase spans 578-858 (FSEDNILGRG…HAVNVLGPLV (281 aa)). ATP-binding positions include 584–592 (LGRGGFGVV) and Lys-606. Residue Asp-707 is the Proton acceptor of the active site. 2 stretches are compositionally biased toward polar residues: residues 898-911 (FHGDFSYSQTQSSI) and 918-928 (FPNTFDSADGR). The tract at residues 898 to 928 (FHGDFSYSQTQSSIPPKASGFPNTFDSADGR) is disordered.

The protein belongs to the protein kinase superfamily. Ser/Thr protein kinase family. In terms of assembly, interacts with BAK1 (via kinase domain), SERK4 and SERK5. In terms of tissue distribution, expressed in roots, leaves, stems, siliques and flowers. Ubiquitous, with a high expression in mature pollen grains and in the pericycle and the xylem vasculature of the primary and lateral roots.

It is found in the membrane. The enzyme catalyses L-seryl-[protein] + ATP = O-phospho-L-seryl-[protein] + ADP + H(+). The catalysed reaction is L-threonyl-[protein] + ATP = O-phospho-L-threonyl-[protein] + ADP + H(+). In terms of biological role, involved in auxin signal transduction and cell expansion and proliferation regulation. May be involved in brassinosteroid-mediated plant growth and development via auxin regulation. May be involved in microspore and pollen development. The sequence is that of Receptor-like kinase TMK4 from Arabidopsis thaliana (Mouse-ear cress).